The primary structure comprises 170 residues: Urease accessory protein UreE (170 aa).

The protein belongs to the UreE family.

Its subcellular location is the cytoplasm. Its function is as follows. Involved in urease metallocenter assembly. Binds nickel. Probably functions as a nickel donor during metallocenter assembly. In Helicobacter pylori (strain P12), this protein is Urease accessory protein UreE.